Here is a 1135-residue protein sequence, read N- to C-terminus: Exportin-6-A (1135 aa).

The region spanning 31-97 is the Importin N-terminal domain; the sequence is IESLLNNFAQ…RNSLPKLLLS (67 aa).

It belongs to the exportin family. As to expression, expressed during meiotic maturation 2 hours after germinal vesicle break down (GVBD) and in unfertilized and fertilized eggs, but not in oocytes (at protein level). Expressed in somatic cells, in oocytes, during meiotic maturation and in unfertilized and fertilized eggs.

The protein resides in the nucleus. The protein localises to the cytoplasm. Its function is as follows. Mediates the nuclear export of actin and profilin-actin complexes in somatic cells. Oocyte nuclei lack active actin export. This Xenopus laevis (African clawed frog) protein is Exportin-6-A (xpo6-a).